Reading from the N-terminus, the 298-residue chain is Glyoxalase domain-containing protein 4 (298 aa).

The VOC 1 domain maps to 5–130; it reads RALHFVFKVK…GGYKFYLQDR (126 aa). Lys-109 bears the N6-succinyllysine mark. The residue at position 131 (Ser-131) is a Phosphoserine. The region spanning 137-258 is the VOC 2 domain; sequence PVLKVTLAVS…DGHEICFVGD (122 aa). Residue Lys-273 is modified to N6-succinyllysine.

It belongs to the glyoxalase I family. Interacts with NUDT9.

The protein localises to the mitochondrion. In Mus musculus (Mouse), this protein is Glyoxalase domain-containing protein 4 (Glod4).